The sequence spans 103 residues: Small ribosomal subunit protein uS10 (103 aa).

This sequence belongs to the universal ribosomal protein uS10 family. In terms of assembly, part of the 30S ribosomal subunit.

Involved in the binding of tRNA to the ribosomes. The protein is Small ribosomal subunit protein uS10 of Borrelia duttonii (strain Ly).